A 92-amino-acid polypeptide reads, in one-letter code: SPbeta prophage-derived uncharacterized protein YopY (92 aa).

This Bacillus subtilis (strain 168) protein is SPbeta prophage-derived uncharacterized protein YopY (yopY).